The chain runs to 331 residues: Ketol-acid reductoisomerase (NADP(+)) (331 aa).

Residues 2–182 (AKLFYDSDAD…GGTRAGILET (181 aa)) form the KARI N-terminal Rossmann domain. NADP(+)-binding positions include 25-28 (YGSQ), serine 51, serine 53, and 83-86 (DEFQ). The active site involves histidine 108. Residue glycine 134 participates in NADP(+) binding. A KARI C-terminal knotted domain is found at 183–328 (NFKEETETDL…KTLRSMFSWL (146 aa)). Mg(2+) contacts are provided by aspartate 191, glutamate 195, glutamate 227, and glutamate 231. Serine 252 is a binding site for substrate.

Belongs to the ketol-acid reductoisomerase family. It depends on Mg(2+) as a cofactor.

It catalyses the reaction (2R)-2,3-dihydroxy-3-methylbutanoate + NADP(+) = (2S)-2-acetolactate + NADPH + H(+). The enzyme catalyses (2R,3R)-2,3-dihydroxy-3-methylpentanoate + NADP(+) = (S)-2-ethyl-2-hydroxy-3-oxobutanoate + NADPH + H(+). Its pathway is amino-acid biosynthesis; L-isoleucine biosynthesis; L-isoleucine from 2-oxobutanoate: step 2/4. It participates in amino-acid biosynthesis; L-valine biosynthesis; L-valine from pyruvate: step 2/4. Involved in the biosynthesis of branched-chain amino acids (BCAA). Catalyzes an alkyl-migration followed by a ketol-acid reduction of (S)-2-acetolactate (S2AL) to yield (R)-2,3-dihydroxy-isovalerate. In the isomerase reaction, S2AL is rearranged via a Mg-dependent methyl migration to produce 3-hydroxy-3-methyl-2-ketobutyrate (HMKB). In the reductase reaction, this 2-ketoacid undergoes a metal-dependent reduction by NADPH to yield (R)-2,3-dihydroxy-isovalerate. This chain is Ketol-acid reductoisomerase (NADP(+)), found in Prochlorococcus marinus (strain NATL2A).